A 734-amino-acid polypeptide reads, in one-letter code: MNYITSLLLLSSNTFLHPTTTYLQSMNDSIVLVTSSVSTELTTLGYDPISTISGVNGTNNIDYIKLLNDTNSTFVQLDNSDTDIDDSSSNSEDVSSNDEQIALMNSSSDFSDESDEGNDSDDNGDEVENMENNQANESDTQNENDRVLNYDTSSSENENENENENENQLEQEHQHYYYKNRSKFYNHFLRYPEVVINNNDDRAELASTKNNLLVRSPKSNNRRLIGSSRKKTLKSKSKSKSSKLKHKSRKSHKRRPKLLKSKDVETNEITTVEVITLTITKVLARHDLAAIVTPIQQHQSGHLIIGYPLPIATKSRLHGYYKSSGVLKEVDANPTEEYDSGDGKENTQQNPIPEKMRLPTNDDPYSLKPTHHYDPSATMQNPHKQFTNRTGNFEIPTNVQDIDDITFPIDLSSSDSTSNLYSILPMNQTNLPDVNTLSLAPGTGSVPPRYSNHHSEFTVERPPRPSRTKKRPRIKAKKTMKVSTQISSAMSKSIHITRIGSTSSGIASGITNIVIPNSSSSIYDNYQDSSSDKQPVSLSMPTKTITMTTDTTSEPVTITEKLDKPKFPDIFTIIRSKLLSKKPQETKLHSPTSTDTKSSKLMSSSSSNNNKPEISKTTKEYNQTQESTSYNTTKAVPKTSVVSSTTSTKPNDQGNNILNSFIQFTETIHSRIRFPTADDNNNNAGNNYHRRFTGVVLPENRQFVFRSASQNLSFSVLGLIILLLLLPGLLIIIM.

The N-terminal stretch at 1–16 is a signal peptide; that stretch reads MNYITSLLLLSSNTFL. N-linked (GlcNAc...) asparagine glycans are attached at residues N27, N56, N68, and N71. Residues 78–145 form a disordered region; sequence DNSDTDIDDS…NESDTQNEND (68 aa). The span at 87–98 shows a compositional bias: low complexity; the sequence is SSSNSEDVSSND. N105, N118, N136, and N180 each carry an N-linked (GlcNAc...) asparagine glycan. Over residues 110–129 the composition is skewed to acidic residues; it reads FSDESDEGNDSDDNGDEVEN. Over residues 130–141 the composition is skewed to polar residues; that stretch reads MENNQANESDTQ. Disordered stretches follow at residues 216 to 262 and 331 to 360; these read SPKS…LKSK and DANP…RLPT. A compositionally biased stretch (basic residues) spans 228 to 259; sequence SRKKTLKSKSKSKSSKLKHKSRKSHKRRPKLL. Residues N388 and N427 are each glycosylated (N-linked (GlcNAc...) asparagine). The tract at residues 447 to 479 is disordered; sequence PPRYSNHHSEFTVERPPRPSRTKKRPRIKAKKT. The segment covering 453–463 has biased composition (basic and acidic residues); that stretch reads HHSEFTVERPP. The span at 464-479 shows a compositional bias: basic residues; that stretch reads RPSRTKKRPRIKAKKT. Residue N517 is glycosylated (N-linked (GlcNAc...) asparagine). Residues 582-653 are disordered; that stretch reads KPQETKLHSP…STTSTKPNDQ (72 aa). Residues 592 to 611 are compositionally biased toward low complexity; sequence TSTDTKSSKLMSSSSSNNNK. Positions 620 to 631 are enriched in polar residues; the sequence is EYNQTQESTSYN. N622 and N631 each carry an N-linked (GlcNAc...) asparagine glycan. The segment covering 632 to 650 has biased composition (low complexity); it reads TTKAVPKTSVVSSTTSTKP. S707 carries GPI-anchor amidated serine lipidation. The propeptide at 708–734 is removed in mature form; that stretch reads ASQNLSFSVLGLIILLLLLPGLLIIIM. N711 carries N-linked (GlcNAc...) asparagine glycosylation.

The protein localises to the cell membrane. This Candida albicans (strain SC5314 / ATCC MYA-2876) (Yeast) protein is Predicted GPI-anchored protein 49 (PGA49).